Here is a 502-residue protein sequence, read N- to C-terminus: ATP synthase subunit alpha (502 aa).

The segment at 115–134 (IDGQGPINTTKTRPVEQKAT) is disordered. 169-176 (GDRQTGKT) is a binding site for ATP.

The protein belongs to the ATPase alpha/beta chains family. In terms of assembly, F-type ATPases have 2 components, CF(1) - the catalytic core - and CF(0) - the membrane proton channel. CF(1) has five subunits: alpha(3), beta(3), gamma(1), delta(1), epsilon(1). CF(0) has three main subunits: a(1), b(2) and c(9-12). The alpha and beta chains form an alternating ring which encloses part of the gamma chain. CF(1) is attached to CF(0) by a central stalk formed by the gamma and epsilon chains, while a peripheral stalk is formed by the delta and b chains.

Its subcellular location is the cell membrane. It carries out the reaction ATP + H2O + 4 H(+)(in) = ADP + phosphate + 5 H(+)(out). In terms of biological role, produces ATP from ADP in the presence of a proton gradient across the membrane. The alpha chain is a regulatory subunit. This Staphylococcus haemolyticus (strain JCSC1435) protein is ATP synthase subunit alpha.